A 455-amino-acid chain; its full sequence is Bifunctional protein GlmU (455 aa).

Positions 1–228 are pyrophosphorylase; sequence MYKCALVLAA…YEETIGVNSR (228 aa). Residues 8–11, Lys-22, Gln-73, and 78–79 contribute to the UDP-N-acetyl-alpha-D-glucosamine site; these read LAAG and GT. Asp-103 lines the Mg(2+) pocket. Positions 140, 154, 169, and 226 each coordinate UDP-N-acetyl-alpha-D-glucosamine. Asn-226 is a Mg(2+) binding site. Residues 229-249 are linker; the sequence is VQLAEAEEILKNRINLMHMEN. Residues 250–455 form an N-acetyltransferase region; it reads GVTLIDPRTT…GWVDKKGLKK (206 aa). Residues Arg-331 and Lys-349 each contribute to the UDP-N-acetyl-alpha-D-glucosamine site. Residue His-361 is the Proton acceptor of the active site. 2 residues coordinate UDP-N-acetyl-alpha-D-glucosamine: Tyr-364 and Asn-375. Residues 384–385, Ala-421, and Arg-438 contribute to the acetyl-CoA site; that span reads NY.

The protein in the N-terminal section; belongs to the N-acetylglucosamine-1-phosphate uridyltransferase family. In the C-terminal section; belongs to the transferase hexapeptide repeat family. As to quaternary structure, homotrimer. Requires Mg(2+) as cofactor.

It is found in the cytoplasm. The catalysed reaction is alpha-D-glucosamine 1-phosphate + acetyl-CoA = N-acetyl-alpha-D-glucosamine 1-phosphate + CoA + H(+). It catalyses the reaction N-acetyl-alpha-D-glucosamine 1-phosphate + UTP + H(+) = UDP-N-acetyl-alpha-D-glucosamine + diphosphate. Its pathway is nucleotide-sugar biosynthesis; UDP-N-acetyl-alpha-D-glucosamine biosynthesis; N-acetyl-alpha-D-glucosamine 1-phosphate from alpha-D-glucosamine 6-phosphate (route II): step 2/2. It participates in nucleotide-sugar biosynthesis; UDP-N-acetyl-alpha-D-glucosamine biosynthesis; UDP-N-acetyl-alpha-D-glucosamine from N-acetyl-alpha-D-glucosamine 1-phosphate: step 1/1. The protein operates within bacterial outer membrane biogenesis; LPS lipid A biosynthesis. In terms of biological role, catalyzes the last two sequential reactions in the de novo biosynthetic pathway for UDP-N-acetylglucosamine (UDP-GlcNAc). The C-terminal domain catalyzes the transfer of acetyl group from acetyl coenzyme A to glucosamine-1-phosphate (GlcN-1-P) to produce N-acetylglucosamine-1-phosphate (GlcNAc-1-P), which is converted into UDP-GlcNAc by the transfer of uridine 5-monophosphate (from uridine 5-triphosphate), a reaction catalyzed by the N-terminal domain. This Clostridium beijerinckii (strain ATCC 51743 / NCIMB 8052) (Clostridium acetobutylicum) protein is Bifunctional protein GlmU.